A 364-amino-acid chain; its full sequence is Aminomethyltransferase (364 aa).

The protein belongs to the GcvT family. The glycine cleavage system is composed of four proteins: P, T, L and H.

The catalysed reaction is N(6)-[(R)-S(8)-aminomethyldihydrolipoyl]-L-lysyl-[protein] + (6S)-5,6,7,8-tetrahydrofolate = N(6)-[(R)-dihydrolipoyl]-L-lysyl-[protein] + (6R)-5,10-methylene-5,6,7,8-tetrahydrofolate + NH4(+). Its function is as follows. The glycine cleavage system catalyzes the degradation of glycine. The sequence is that of Aminomethyltransferase from Shewanella putrefaciens (strain CN-32 / ATCC BAA-453).